We begin with the raw amino-acid sequence, 111 residues long: Probable 4-amino-4-deoxy-L-arabinose-phosphoundecaprenol flippase subunit ArnE (111 aa).

A run of 3 helical transmembrane segments spans residues 38–58 (LWLGLALICMGAAMVLWLLVL), 61–81 (LPVGIAYPMLSLNFVWVTLAA), and 91–111 (PRHWLGVALIISGIIILGSAA). The 70-residue stretch at 40-109 (LGLALICMGA…IISGIIILGS (70 aa)) folds into the EamA domain.

It belongs to the ArnE family. Heterodimer of ArnE and ArnF.

The protein resides in the cell inner membrane. Its pathway is bacterial outer membrane biogenesis; lipopolysaccharide biosynthesis. In terms of biological role, translocates 4-amino-4-deoxy-L-arabinose-phosphoundecaprenol (alpha-L-Ara4N-phosphoundecaprenol) from the cytoplasmic to the periplasmic side of the inner membrane. The chain is Probable 4-amino-4-deoxy-L-arabinose-phosphoundecaprenol flippase subunit ArnE from Salmonella choleraesuis (strain SC-B67).